Here is a 155-residue protein sequence, read N- to C-terminus: 6,7-dimethyl-8-ribityllumazine synthase (155 aa).

Residues Trp-23, 57–59, and 81–83 each bind 5-amino-6-(D-ribitylamino)uracil; these read AWE and CVI. Residue 86 to 87 coordinates (2S)-2-hydroxy-3-oxobutyl phosphate; the sequence is DT. The Proton donor role is filled by His-89. Asn-114 is a binding site for 5-amino-6-(D-ribitylamino)uracil. Residue Arg-128 participates in (2S)-2-hydroxy-3-oxobutyl phosphate binding.

This sequence belongs to the DMRL synthase family. Forms an icosahedral capsid composed of 60 subunits, arranged as a dodecamer of pentamers.

It carries out the reaction (2S)-2-hydroxy-3-oxobutyl phosphate + 5-amino-6-(D-ribitylamino)uracil = 6,7-dimethyl-8-(1-D-ribityl)lumazine + phosphate + 2 H2O + H(+). Its pathway is cofactor biosynthesis; riboflavin biosynthesis; riboflavin from 2-hydroxy-3-oxobutyl phosphate and 5-amino-6-(D-ribitylamino)uracil: step 1/2. Its function is as follows. Catalyzes the formation of 6,7-dimethyl-8-ribityllumazine by condensation of 5-amino-6-(D-ribitylamino)uracil with 3,4-dihydroxy-2-butanone 4-phosphate. This is the penultimate step in the biosynthesis of riboflavin. This is 6,7-dimethyl-8-ribityllumazine synthase from Stenotrophomonas maltophilia (strain R551-3).